Reading from the N-terminus, the 325-residue chain is Diacylglycerol acyltransferase/mycolyltransferase Ag85B (325 aa).

The signal sequence occupies residues 1–40 (MTDVSGKIRAWGRRLLVGAAAAAALPGLVGLAGGAATAGA). 82 to 83 (LR) serves as a coordination point for substrate. A fibronectin-binding region spans residues 98 to 108 (FEWYYQSGLSV). Cysteines 127 and 132 form a disulfide. The substrate site is built by Ser166 and Asp194. Residue Ser166 is the Nucleophile of the active site. Residue Glu270 is part of the active site. Substrate contacts are provided by residues 272–275 (FVRS), Lys279, and 302–304 (HSW). The active site involves His302.

The protein belongs to the mycobacterial A85 antigen family.

The protein resides in the secreted. The catalysed reaction is 2 alpha,alpha'-trehalose 6-mycolate = alpha,alpha'-trehalose 6,6'-bismycolate + alpha,alpha-trehalose. It catalyses the reaction an acyl-CoA + a 1,2-diacyl-sn-glycerol = a triacyl-sn-glycerol + CoA. Functionally, the antigen 85 proteins (FbpA, FbpB, FbpC) are responsible for the high affinity of mycobacteria for fibronectin, a large adhesive glycoprotein, which facilitates the attachment of M.tuberculosis to murine alveolar macrophages (AMs). They also help to maintain the integrity of the cell wall by catalyzing the transfer of mycolic acids to cell wall arabinogalactan and through the synthesis of alpha,alpha-trehalose dimycolate (TDM, cord factor). They catalyze the transfer of a mycoloyl residue from one molecule of alpha,alpha-trehalose monomycolate (TMM) to another TMM, leading to the formation of TDM. This chain is Diacylglycerol acyltransferase/mycolyltransferase Ag85B (fbpB), found in Mycobacterium kansasii.